The primary structure comprises 289 residues: Early E1A protein (289 aa).

Residues proline 41–leucine 49 are interaction with RB1 in competition with E2F1. The interaction with UBE2I stretch occupies residues glutamate 76 to glutamate 140. A disordered region spans residues threonine 82–leucine 107. Over residues proline 84–proline 93 the composition is skewed to pro residues. Serine 89 is subject to Phosphoserine; by host. The PXLXP motif, interaction with host ZMYND11 motif lies at proline 113–proline 117. The LXCXE motif, interaction with host RB1 and TMEM173/STING motif lies at leucine 122–glutamate 126. Residues cysteine 154 to cysteine 174 fold into a zinc finger. The interval valine 187–proline 245 is disordered. Phosphoserine; by host occurs at positions 219 and 231. A compositionally biased stretch (polar residues) spans serine 219–serine 237. The Bipartite nuclear localization signal signature appears at arginine 258 to proline 289. A PXDLS motif, CTBP-binding motif is present at residues proline 279–serine 283.

It belongs to the adenoviridae E1A protein family. In terms of assembly, interacts with host UBE2I; this interaction interferes with polySUMOylation. Interacts with host RB1; this interaction induces the aberrant dissociation of RB1-E2F1 complex thereby disrupting the activity of RB1 and activating E2F1-regulated genes. Interacts with host ATF7; the interaction enhances ATF7-mediated viral transactivation activity which requires the zinc binding domains of both proteins. Isoform early E1A 32 kDa protein and isoform early E1A 26 kDa protein interact (via N-terminus) with CUL1 and E3 ubiquitin ligase RBX1; these interactions inhibit RBX1-CUL1-dependent elongation reaction of ubiquitin chains and attenuate ubiquitination of SCF(FBXW7) target proteins. Interacts (via PXLXP motif) with host ZMYND11/BS69 (via MYND-type zinc finger); this interaction inhibits E1A mediated transactivation. Interacts with host EP300; this interaction stimulates the acetylation of RB1 by recruiting EP300 and RB1 into a multimeric-protein complex. Interacts with host CTBP1 and CTBP2; this interaction seems to potentiate viral replication. Interacts with host DCAF7. Interacts with host DYRK1A. Interacts with host KPNA4; this interaction allows E1A import into the host nucleus. Interacts with host EP400; this interaction stabilizes MYC. Interacts (via LXCXE motif) with host TMEM173/STING; this interaction impairs the ability of TMEM173/STING to sense cytosolic DNA and promote the production of type I interferon (IFN-alpha and IFN-beta). Interacts (via C-terminus) with host ZBED1/hDREF (via C-terminus); the interaction is direct.

It localises to the host nucleus. Its function is as follows. Plays a role in viral genome replication by driving entry of quiescent cells into the cell cycle. Stimulation of progression from G1 to S phase allows the virus to efficiently use the cellular DNA replicating machinery to achieve viral genome replication. E1A protein has both transforming and trans-activating activities. Induces the disassembly of the E2F1 transcription factor from RB1 by direct competition for the same binding site on RB1, with subsequent transcriptional activation of E2F1-regulated S-phase genes and of the E2 region of the adenoviral genome. Release of E2F1 leads to the ARF-mediated inhibition of MDM2 and causes TP53/p53 to accumulate because it is not targeted for degradation by MDM2-mediated ubiquitination anymore. This increase in TP53, in turn, would arrest the cell proliferation and direct its death but this effect is counteracted by the viral protein E1B-55K. Inactivation of the ability of RB1 to arrest the cell cycle is critical for cellular transformation, uncontrolled cellular growth and proliferation induced by viral infection. Interaction with RBX1 and CUL1 inhibits ubiquitination of the proteins targeted by SCF(FBXW7) ubiquitin ligase complex, and may be linked to unregulated host cell proliferation. The tumorigenesis-restraining activity of E1A may be related to the disruption of the host CtBP-CtIP complex through the CtBP binding motif. Interacts with host TBP protein; this interaction probably disrupts the TBP-TATA complex. Interaction with host TMEM173/STING impairs the ability of TMEM173/STING to sense cytosolic DNA and promote the production of type I interferon (IFN-alpha and IFN-beta). Promotes the sumoylation of host ZBED1/hDREF with SUMO1. The polypeptide is Early E1A protein (Homo sapiens (Human)).